The following is a 371-amino-acid chain: MSL complex subunit 3B (371 aa).

Disordered stretches follow at residues 1–47 (MATL…DERA) and 160–230 (EERA…PQAK). Positions 8 to 47 (PKDDGEGKDEGGSDRGDGDSKPKGKKEVEPHTRREADERA) are enriched in basic and acidic residues. One can recognise an MRG domain in the interval 44–367 (DERAMRIPIP…CEAHYSSKNP (324 aa)). Over residues 183-193 (SESQAVAGPAA) the composition is skewed to low complexity. A compositionally biased stretch (basic residues) spans 206–216 (APRRSTRHSTH).

The protein resides in the nucleus. Functionally, probable non-catalytic component of the MSL histone acetyltransferase complex, a multiprotein complex that mediates the majority of histone H4 acetylation at 'Lys-16' (H4K16ac), an epigenetic mark that prevents chromatin compaction. This chain is MSL complex subunit 3B, found in Mus musculus (Mouse).